The chain runs to 343 residues: Small ribosomal subunit biogenesis GTPase RsgA (343 aa).

Residues 1–32 are disordered; sequence MAKRRLSKRQVDRIRERQSQRLDTSVAAPDGK. Over residues 9-20 the composition is skewed to basic and acidic residues; the sequence is RQVDRIRERQSQ. The CP-type G domain occupies 109-273; the sequence is YGKLKPVAAN…CIDSPGIREF (165 aa). Residues 156–159 and 215–223 each bind GTP; these read NKLD and GQSGVGKSS. Zn(2+) contacts are provided by cysteine 297, cysteine 302, histidine 304, and cysteine 310.

The protein belongs to the TRAFAC class YlqF/YawG GTPase family. RsgA subfamily. As to quaternary structure, monomer. Associates with 30S ribosomal subunit, binds 16S rRNA. It depends on Zn(2+) as a cofactor.

It is found in the cytoplasm. One of several proteins that assist in the late maturation steps of the functional core of the 30S ribosomal subunit. Helps release RbfA from mature subunits. May play a role in the assembly of ribosomal proteins into the subunit. Circularly permuted GTPase that catalyzes slow GTP hydrolysis, GTPase activity is stimulated by the 30S ribosomal subunit. This Saccharophagus degradans (strain 2-40 / ATCC 43961 / DSM 17024) protein is Small ribosomal subunit biogenesis GTPase RsgA.